The primary structure comprises 149 residues: Arginine repressor (149 aa).

This sequence belongs to the ArgR family.

It localises to the cytoplasm. Its pathway is amino-acid biosynthesis; L-arginine biosynthesis [regulation]. In terms of biological role, regulates arginine biosynthesis genes. The chain is Arginine repressor from Chlorobaculum tepidum (strain ATCC 49652 / DSM 12025 / NBRC 103806 / TLS) (Chlorobium tepidum).